The chain runs to 498 residues: Lysine--tRNA ligase (498 aa).

Glutamate 408 and glutamate 415 together coordinate Mg(2+).

This sequence belongs to the class-II aminoacyl-tRNA synthetase family. Homodimer. Requires Mg(2+) as cofactor.

It localises to the cytoplasm. The catalysed reaction is tRNA(Lys) + L-lysine + ATP = L-lysyl-tRNA(Lys) + AMP + diphosphate. This is Lysine--tRNA ligase from Listeria monocytogenes serovar 1/2a (strain ATCC BAA-679 / EGD-e).